The following is a 427-amino-acid chain: UPF0229 protein YeaH (427 aa).

A compositionally biased stretch (basic and acidic residues) spans 79-90 (NDHFVQNDRIER). Residues 79-110 (NDHFVQNDRIERPQGGGGGSGSGQGQASQDGE) are disordered. Positions 92-102 (QGGGGGSGSGQ) are enriched in gly residues.

The protein belongs to the UPF0229 family.

The chain is UPF0229 protein YeaH from Escherichia coli (strain K12 / MC4100 / BW2952).